The primary structure comprises 225 residues: PKHD-type hydroxylase YbiX (225 aa).

In terms of domain architecture, Fe2OG dioxygenase spans 78–177 (TLSTPLFNRY…RVASFMWIQS (100 aa)). Positions 96, 98, and 158 each coordinate Fe cation. Arg-168 is a 2-oxoglutarate binding site.

The cofactor is Fe(2+). It depends on L-ascorbate as a cofactor.

In Escherichia coli (strain K12 / DH10B), this protein is PKHD-type hydroxylase YbiX.